The primary structure comprises 244 residues: Type I iodothyronine deiodinase (244 aa).

At 1–12 (MGLSQLGLWLRR) the chain is on the extracellular side. The chain crosses the membrane as a helical; Signal-anchor for type III membrane protein span at residues 13 to 33 (LWVLFQVALQVAVGKVFLILF). The Cytoplasmic segment spans residues 34-244 (PSRVKQHIVA…VRAVLEKLHS (211 aa)). The active site involves Sec-121. Sec-121 is a non-standard amino acid (selenocysteine).

This sequence belongs to the iodothyronine deiodinase family. Predominantly monomer. Can form homodimers but homodimerization is not essential for enzyme activity.

Its subcellular location is the cell membrane. The protein localises to the endoplasmic reticulum membrane. The protein resides in the basolateral cell membrane. The enzyme catalyses 3,3',5-triiodo-L-thyronine + iodide + A + H(+) = L-thyroxine + AH2. It carries out the reaction 3,3',5'-triiodo-L-thyronine + iodide + A + H(+) = L-thyroxine + AH2. The catalysed reaction is 3,3'-diiodo-L-thyronine + iodide + A + H(+) = 3,3',5'-triiodo-L-thyronine + AH2. It catalyses the reaction 3,3'-diiodo-L-thyronine + iodide + A + H(+) = 3,3',5-triiodo-L-thyronine + AH2. The enzyme catalyses 3'-iodo-L-thyronine + iodide + A + H(+) = 3',5'-diiodo-L-thyronine + AH2. It carries out the reaction 3-iodo-L-thyronine + iodide + A + H(+) = 3,5-diiodo-L-thyronine + AH2. The catalysed reaction is 3-iodo-L-thyronine + iodide + A + H(+) = 3,3'-diiodo-L-thyronine + AH2. It catalyses the reaction 3,3'-diiodothyronamine + iodide + A + H(+) = 3,3',5'-triiodothyronamine + AH2. The enzyme catalyses 3'-iodothyronamine + iodide + A + H(+) = 3',5'-diiodothyronamine + AH2. It carries out the reaction 3-iodothyronamine + iodide + A + H(+) = 3,3'-diiodothyronamine + AH2. The catalysed reaction is 3,3'-diiodothyronamine + iodide + A + H(+) = 3,3',5-triiodothyronamine + AH2. It catalyses the reaction 3-iodothyronamine + iodide + A + H(+) = 3,5-diiodothyronamine + AH2. The enzyme catalyses 3,3'-diiodo-L-thyronine sulfate + iodide + A + H(+) = 3,3',5'-triiodo-L-thyronine sulfate + AH2. It carries out the reaction 3,3',5'-triiodo-L-thyronine sulfate + iodide + A + H(+) = L-thyroxine sulfate + AH2. The catalysed reaction is 3,3'-diiodo-L-thyronine sulfate + iodide + A + H(+) = 3,3',5-triiodo-L-thyronine sulfate + AH2. Plays a crucial role in the metabolism of thyroid hormones (TH) and has specific roles in TH activation and inactivation by deiodination. Catalyzes the deiodination of L-thyroxine (T4) to 3,5,3'-triiodothyronine (T3) and 3',5'-diiodothyronine (3',5'-T2) to 3'-monoiodothyronine (3'-T1) via outer-ring deiodination (ORD). Catalyzes the deiodination of T4 to 3,3',5'-triiodothyronine (rT3), T3 to 3,3'-diiodothyronine (3,3'-T2), 3,5-diiodothyronine (3,5-T2) to 3-monoiodothyronine (3-T1) and 3,3'-T2 to 3-T1 via inner-ring deiodination (IRD). Catalyzes the deiodination of rT3 to 3,3'-T2 via ORD. Catalyzes the phenolic ring deiodinations of 3,3',5'-triiodothyronamine, 3',5'-diiodothyronamine and 3,3'-diiodothyronamine as well as tyrosyl ring deiodinations of 3,5,3'-triiodothyronamine and 3,5-diiodothyronamine. Catalyzes the deiodination of L-thyroxine sulfate and 3,3',5-triiodo-L-thyronine sulfate via IRD and of 3,3',5'-triiodo-L-thyronine sulfate via ORD. The protein is Type I iodothyronine deiodinase (DIO1) of Felis catus (Cat).